The following is a 473-amino-acid chain: H(+)/Cl(-) exchange transporter ClcA (473 aa).

Residues 1–32 are Cytoplasmic-facing; that stretch reads MKTDTPSLETPQAARLRRRQLIRQLLERDKTP. Residues 33–69 form a helical membrane-spanning segment; that stretch reads LAILFMAAVVGTLVGLAAVAFDKGVAWLQNQRMGALV. At 70–76 the chain is on the periplasmic side; it reads HTADNYP. A helical transmembrane segment spans residues 77-100; it reads LLLTVAFLCSAVLAMFGYFLVRKY. The short motif at 106–110 is the Selectivity filter part_1 element; that stretch reads GSGIP. Residue serine 107 participates in chloride binding. Residues 109–116 constitute an intramembrane region (helical); sequence IPEIEGAL. Residues 117-123 lie on the Cytoplasmic side of the membrane; that stretch reads EDQRPVR. The next 2 membrane-spanning stretches (helical) occupy residues 124–141 and 148–166; these read WWRVLPVKFFGGLGTLGG and EGPTVQIGGNIGRMVLDVF. The Selectivity filter part_2 motif lies at 146–150; it reads GREGP. Topologically, residues 167 to 176 are cytoplasmic; sequence RLKGDEARHT. 2 consecutive intramembrane regions (helical) follow at residues 177–189 and 193–201; these read LLATGAAAGLAAA and PLAGILFII. The Cytoplasmic segment spans residues 202 to 214; the sequence is EEMRPQFRYTLIS. Residues 215–232 form a helical membrane-spanning segment; that stretch reads IKAVFIGVIMSTIMYRIF. Over 233–252 the chain is Periplasmic; sequence NHEVALIDVGKLSDAPLNTL. A helical transmembrane segment spans residues 253–281; it reads WLYLILGIIFGIFGPIFNKWVLGMQDLLH. At 282–287 the chain is on the cytoplasmic side; the sequence is RVHGGN. A helical transmembrane segment spans residues 288–309; the sequence is ITKWVLMGGAIGGLCGLLGFVA. The Periplasmic portion of the chain corresponds to 310–329; it reads PATSGGGFNLIPIATAGNFS. The next 2 helical transmembrane spans lie at 330-349 and 355-376; these read MGMLVFIFVARVITTLLCFS and GIFAPMLALGTVLGTAFGMVAV. Residues 355 to 359 carry the Selectivity filter part_3 motif; it reads GIFAP. 2 residues coordinate chloride: isoleucine 356 and phenylalanine 357. Topologically, residues 377-386 are periplasmic; sequence ELFPQYHLEA. Residues 387-401 constitute an intramembrane region (helical); sequence GTFAIAGMGALLAAS. Residues 402-404 constitute an intramembrane region (note=Loop between two helices); that stretch reads IRA. The segment at residues 405 to 416 is an intramembrane region (helical); it reads PLTGIILVLEMT. Residues 417–421 constitute an intramembrane region (note=Loop between two helices); that stretch reads DNYQL. The chain crosses the membrane as a helical span at residues 422-438; sequence ILPMIITGLGATLLAQF. At 439-473 the chain is on the cytoplasmic side; the sequence is TGGKPLYSAILARTLAKQEAEQLARSKAASARENT. Tyrosine 445 is a binding site for chloride.

It belongs to the chloride channel (TC 2.A.49) family. ClcA subfamily. In terms of assembly, homodimer.

It localises to the cell inner membrane. The enzyme catalyses 2 chloride(in) + H(+)(out) = 2 chloride(out) + H(+)(in). Its function is as follows. Proton-coupled chloride transporter. Functions as antiport system and exchanges two chloride ions for 1 proton. Probably acts as an electrical shunt for an outwardly-directed proton pump that is linked to amino acid decarboxylation, as part of the extreme acid resistance (XAR) response. The polypeptide is H(+)/Cl(-) exchange transporter ClcA (Escherichia coli O45:K1 (strain S88 / ExPEC)).